Consider the following 278-residue polypeptide: Digeranylgeranylglyceryl phosphate synthase (278 aa).

Transmembrane regions (helical) follow at residues 12-32 (LKNCLTASFGAFIGGLIASYF), 34-54 (ISMIDNLILASIVVFLVCGFG), 91-111 (LLVVMGLIISMFNITCFLMAV), 142-162 (VFIFGGIAVGNIDVTIMLFLC), 204-224 (FLLVFAVLLSPLPYLFGFFGI), 226-246 (YLISVIFCDLLFLIGIYNLVM), and 257-277 (SRNIKIVTNLVLIAFLIGSLF).

The protein belongs to the UbiA prenyltransferase family. DGGGP synthase subfamily. Requires Mg(2+) as cofactor.

It localises to the cell membrane. The catalysed reaction is sn-3-O-(geranylgeranyl)glycerol 1-phosphate + (2E,6E,10E)-geranylgeranyl diphosphate = 2,3-bis-O-(geranylgeranyl)-sn-glycerol 1-phosphate + diphosphate. It functions in the pathway membrane lipid metabolism; glycerophospholipid metabolism. In terms of biological role, prenyltransferase that catalyzes the transfer of the geranylgeranyl moiety of geranylgeranyl diphosphate (GGPP) to the C2 hydroxyl of (S)-3-O-geranylgeranylglyceryl phosphate (GGGP). This reaction is the second ether-bond-formation step in the biosynthesis of archaeal membrane lipids. The chain is Digeranylgeranylglyceryl phosphate synthase from Methanococcus maripaludis (strain C6 / ATCC BAA-1332).